The chain runs to 194 residues: Crossover junction endodeoxyribonuclease RuvC (194 aa).

Residues Asp7, Glu68, and Asp141 contribute to the active site. Mg(2+) is bound by residues Asp7, Glu68, and Asp141.

It belongs to the RuvC family. Homodimer which binds Holliday junction (HJ) DNA. The HJ becomes 2-fold symmetrical on binding to RuvC with unstacked arms; it has a different conformation from HJ DNA in complex with RuvA. In the full resolvosome a probable DNA-RuvA(4)-RuvB(12)-RuvC(2) complex forms which resolves the HJ. The cofactor is Mg(2+).

It localises to the cytoplasm. It carries out the reaction Endonucleolytic cleavage at a junction such as a reciprocal single-stranded crossover between two homologous DNA duplexes (Holliday junction).. Functionally, the RuvA-RuvB-RuvC complex processes Holliday junction (HJ) DNA during genetic recombination and DNA repair. Endonuclease that resolves HJ intermediates. Cleaves cruciform DNA by making single-stranded nicks across the HJ at symmetrical positions within the homologous arms, yielding a 5'-phosphate and a 3'-hydroxyl group; requires a central core of homology in the junction. The consensus cleavage sequence is 5'-(A/T)TT(C/G)-3'. Cleavage occurs on the 3'-side of the TT dinucleotide at the point of strand exchange. HJ branch migration catalyzed by RuvA-RuvB allows RuvC to scan DNA until it finds its consensus sequence, where it cleaves and resolves the cruciform DNA. This chain is Crossover junction endodeoxyribonuclease RuvC, found in Bifidobacterium longum (strain DJO10A).